Consider the following 142-residue polypeptide: Alpha-lactalbumin (142 aa).

An N-terminal signal peptide occupies residues 1-19 (MMSFVSLLLVGILFHATQA). A C-type lysozyme domain is found at 20 to 142 (EQLTKCEVFR…KLDQWLCEKL (123 aa)). Intrachain disulfides connect cysteine 25–cysteine 139, cysteine 47–cysteine 130, cysteine 80–cysteine 96, and cysteine 92–cysteine 110. N-linked (GlcNAc...) asparagine glycosylation is found at asparagine 64 and asparagine 93. Ca(2+) is bound by residues lysine 98, aspartate 101, aspartate 103, aspartate 106, and aspartate 107.

This sequence belongs to the glycosyl hydrolase 22 family. As to quaternary structure, lactose synthase (LS) is a heterodimer of a catalytic component, beta1,4-galactosyltransferase (beta4Gal-T1) and a regulatory component, alpha-lactalbumin (LA). Mammary gland specific. Secreted in milk.

The protein localises to the secreted. In terms of biological role, regulatory subunit of lactose synthase, changes the substrate specificity of galactosyltransferase in the mammary gland making glucose a good acceptor substrate for this enzyme. This enables LS to synthesize lactose, the major carbohydrate component of milk. In other tissues, galactosyltransferase transfers galactose onto the N-acetylglucosamine of the oligosaccharide chains in glycoproteins. The protein is Alpha-lactalbumin (LALBA) of Bos mutus grunniens (Wild yak).